Reading from the N-terminus, the 475-residue chain is Aspartyl/glutamyl-tRNA(Asn/Gln) amidotransferase subunit B (475 aa).

It belongs to the GatB/GatE family. GatB subfamily. Heterotrimer of A, B and C subunits.

The enzyme catalyses L-glutamyl-tRNA(Gln) + L-glutamine + ATP + H2O = L-glutaminyl-tRNA(Gln) + L-glutamate + ADP + phosphate + H(+). The catalysed reaction is L-aspartyl-tRNA(Asn) + L-glutamine + ATP + H2O = L-asparaginyl-tRNA(Asn) + L-glutamate + ADP + phosphate + 2 H(+). Allows the formation of correctly charged Asn-tRNA(Asn) or Gln-tRNA(Gln) through the transamidation of misacylated Asp-tRNA(Asn) or Glu-tRNA(Gln) in organisms which lack either or both of asparaginyl-tRNA or glutaminyl-tRNA synthetases. The reaction takes place in the presence of glutamine and ATP through an activated phospho-Asp-tRNA(Asn) or phospho-Glu-tRNA(Gln). This chain is Aspartyl/glutamyl-tRNA(Asn/Gln) amidotransferase subunit B, found in Staphylococcus carnosus (strain TM300).